Reading from the N-terminus, the 486-residue chain is MATASDSKYKRTNTNGMQHQPLDVAIVGGGLVGSLLALHLGKKGHEVNLYEYREDIRTAELVIGRSINLALSARGRRALAEVGLEDALLNHGIPMSGRMLHDVNGKCKIVPYDANTNQCIYSVGRKHLNEVLLNAAEKYPNIHLHFNHKLVSANLDEGNLSMVDPVTKDVKSARADLIVGCDGAYSAVRKEIVKRPRYDFSQTYIEHGYLELCIPPTAGGEFAMPHNYLHIWPRGQFMMIALPNQDRTWTVTLFMPFTQFHSITDQGLLLDFFRQHFPDAIELIGRERLVKDFFKTKAQPLVMIKCRPYHIGAKALIIGDAAHAMVPFYGQGMNAGFEDCSVLTELFNQYGTDLARILPEFSEKRWEDAHAICDLAMYNYIEMRDLVTKRSYLLRKKLDELLFWMMPNTWVPLYNSVSFSHMRYSKCIANRAWQDKILTRVLYGASIASVAAIGGLCYRHVTMGHLERLSTRILSTFQLLKPKASV.

Transmembrane regions (helical) follow at residues 401-424 (LLFW…HMRY) and 437-459 (ILTR…LCYR).

This sequence belongs to the aromatic-ring hydroxylase family. KMO subfamily. Requires FAD as cofactor.

The protein resides in the mitochondrion. It is found in the membrane. It carries out the reaction L-kynurenine + NADPH + O2 + H(+) = 3-hydroxy-L-kynurenine + NADP(+) + H2O. Its pathway is cofactor biosynthesis; NAD(+) biosynthesis; quinolinate from L-kynurenine: step 1/3. Catalyzes the hydroxylation of L-kynurenine (L-Kyn) to form 3-hydroxy-L-kynurenine (L-3OHKyn). Required for synthesis of quinolinic acid. The chain is Kynurenine 3-monooxygenase (kh) from Anopheles gambiae (African malaria mosquito).